The primary structure comprises 893 residues: Desmocollin-1 (893 aa).

Positions 1–29 (MAVASAAPGSIFWKQLLFSLLVLILFCDA) are cleaved as a signal peptide. A propeptide spanning residues 30 to 132 (CQKISLQVPS…KDAVLRRTKR (103 aa)) is cleaved from the precursor. Cadherin domains are found at residues 133–240 (RWAP…APYF), 241–352 (ENKL…APYF), 353–470 (TETS…GPEC), 471–574 (QPPV…DHPP), and 575–682 (QIKQ…LSRE). Residues 133 to 692 (RWAPIPCSLM…AALANVFLGK (560 aa)) lie on the Extracellular side of the membrane. The N-linked (GlcNAc...) asparagine glycan is linked to asparagine 163. At threonine 383 the chain carries Phosphothreonine. 2 N-linked (GlcNAc...) asparagine glycosylation sites follow: asparagine 398 and asparagine 545. A helical transmembrane segment spans residues 693-715 (WAILAMVLGSVLLLCILFTCFCV). The Cytoplasmic segment spans residues 716–893 (TVKKTVKKCF…RTLAKTCVKK (178 aa)).

Binds to JUP/plakoglobin. Post-translationally, isoform 1A is phosphorylated on a serine but isoform 1B is not. As to expression, epidermis and weakly in tongue papillae.

The protein resides in the cell membrane. The protein localises to the cell junction. Its subcellular location is the desmosome. A component of desmosome cell-cell junctions which are required for positive regulation of cellular adhesion. Required for desmosome adhesion strength between the granular layers of the epidermis, as a result moderates epidermal proliferation and differentiation. Is therefore required to maintain postnatal epidermal barrier function and normal hair follicle morphology into adulthood. This is Desmocollin-1 (DSC1) from Bos taurus (Bovine).